Consider the following 184-residue polypeptide: Photosystem I assembly protein Ycf4 (184 aa).

A run of 2 helical transmembrane segments spans residues 22-42 (FFWA…GTSS) and 57-77 (IIFF…LFIS).

It belongs to the Ycf4 family.

The protein localises to the plastid. The protein resides in the chloroplast thylakoid membrane. Functionally, seems to be required for the assembly of the photosystem I complex. The protein is Photosystem I assembly protein Ycf4 of Aethionema grandiflorum (Persian stone-cress).